A 469-amino-acid polypeptide reads, in one-letter code: Hydrogen cyanide synthase subunit HcnB (469 aa).

Heterotrimer of HcnA, HcnB and HcnC.

The protein resides in the cell membrane. It carries out the reaction glycine + 2 A = hydrogen cyanide + 2 AH2 + CO2. A three-component membrane-bound flavoenzyme that catalyzes the formation of hydrogen cyanide, a secondary metabolite, by transfer of electrons to a cyanide-resistant branch of the aerobic respiratory chain. Contributes to suppression of black root rot of tobacco. This chain is Hydrogen cyanide synthase subunit HcnB, found in Pseudomonas protegens (strain DSM 19095 / LMG 27888 / CFBP 6595 / CHA0).